Here is a 415-residue protein sequence, read N- to C-terminus: Cell division control protein 11 (415 aa).

Ser-2 carries the N-acetylserine modification. Position 2 is a phosphoserine (Ser-2). The short motif at 12–19 (RKRKHLKR) is the Basic motif element. The Septin-type G domain maps to 19-298 (RGITFTVMIV…ERYRTEALSG (280 aa)). The G1 motif stretch occupies residues 29–36 (GQSGSGRS). Residues 29–36 (GQSGSGRS), Gly-92, 172–180 (KSDSLTRDE), Gly-230, and Arg-247 each bind GTP. The G3 motif stretch occupies residues 89 to 92 (DTPG). The segment at 171 to 174 (SKSD) is G4 motif. Phosphoserine is present on Ser-305. A disordered region spans residues 307–360 (RPNLTKLNGSSSSSTTTRRNTNPFKQSNNINNDVLNPASDMHGQSTGENNETYM). Residues 316–328 (SSSSSTTTRRNTN) show a composition bias toward low complexity. A Phosphothreonine modification is found at Thr-327. Polar residues-rich tracts occupy residues 329–340 (PFKQSNNINNDV) and 348–359 (HGQSTGENNETY). Positions 354–414 (ENNETYMTRE…LEKEAKIKQE (61 aa)) form a coiled coil. Residue Lys-412 forms a Glycyl lysine isopeptide (Lys-Gly) (interchain with G-Cter in SUMO) linkage.

Belongs to the TRAFAC class TrmE-Era-EngA-EngB-Septin-like GTPase superfamily. Septin GTPase family. In terms of assembly, component of the septin complex which consists of CDC3, CDC10, CDC11, CDC12 and probably SHS1 and rearranges to a cortical collar of highly ordered filaments at the mother-bud-neck. A complex formed by CDC3, CDC10, CDC11 and CDC12 is capable of forming long filaments in vitro and the components seem to be present in a 2:2:2:2 arrangement in vivo. The filaments are proposed to be formed by the end-to-end polymerization of CDC3-CDC12-CDC11 complexes with CDC10 serving as a bridge to bundle the polymers into paired filaments. Component of the GIN4 complex composed of at least BNI5, CDC3, CDC10, CDC11, CDC12, GIN4, NAP1 and SHS1. Self-associates. Interacts with BEM4, KCC4, SPR28 and SYP1. Interacts with BNI5. Post-translationally, sumoylated during mitosis on the mother cell side of the bud neck. Sumoylation probably plays a central role in regulating septin ring disassembly during the cell cycle.

The protein localises to the membrane. It localises to the bud neck. Functionally, septins are GTPases involved in cytokinesis that assemble early in the cell cycle as a patch at the incipient bud site and form a ring approximate 15 minutes before bud emergence, which transforms into an hour-glass shaped collar of cortical filaments that spans both sides of the mother-bud neck. This collar persists until just before cytokinesis, when it splits into two rings that occupy opposite sides of the neck. The septins at the bud neck serve as a structural scaffold that recruits different components involved in diverse processes at specific stages during the cell cycle. Many proteins bind asymmetrically to the septin collar. The septin assembly is regulated by protein kinases GIN4 and/or CLA4. May act by recruiting MYO1 and HOF1, a protein involved in septation, to the site of cleavage. Septins are also involved in cell morphogenesis, bud site selection, chitin deposition, cell cycle regulation, cell compartmentalization and spore wall formation. CDCd11 with SHS1 11 are involved in the recruitment of BNI5 and thereby ensure efficient localization at the bud neck of MYO1, the type II myosin of the actomyosin contractile ring. This chain is Cell division control protein 11, found in Saccharomyces cerevisiae (strain ATCC 204508 / S288c) (Baker's yeast).